Consider the following 453-residue polypeptide: Glutamyl-tRNA(Gln) amidotransferase subunit A (453 aa).

Active-site charge relay system residues include Lys56 and Ser131. Ser155 functions as the Acyl-ester intermediate in the catalytic mechanism.

Belongs to the amidase family. GatA subfamily. Heterotrimer of A, B and C subunits.

It catalyses the reaction L-glutamyl-tRNA(Gln) + L-glutamine + ATP + H2O = L-glutaminyl-tRNA(Gln) + L-glutamate + ADP + phosphate + H(+). Its function is as follows. Allows the formation of correctly charged Gln-tRNA(Gln) through the transamidation of misacylated Glu-tRNA(Gln) in organisms which lack glutaminyl-tRNA synthetase. The reaction takes place in the presence of glutamine and ATP through an activated gamma-phospho-Glu-tRNA(Gln). This chain is Glutamyl-tRNA(Gln) amidotransferase subunit A, found in Campylobacter jejuni (strain RM1221).